The following is a 134-amino-acid chain: Holo-[acyl-carrier-protein] synthase (134 aa).

2 residues coordinate Mg(2+): Asp-8 and Glu-56.

Belongs to the P-Pant transferase superfamily. AcpS family. Mg(2+) is required as a cofactor.

Its subcellular location is the cytoplasm. The catalysed reaction is apo-[ACP] + CoA = holo-[ACP] + adenosine 3',5'-bisphosphate + H(+). Its function is as follows. Transfers the 4'-phosphopantetheine moiety from coenzyme A to a Ser of acyl-carrier-protein. This Clostridium kluyveri (strain ATCC 8527 / DSM 555 / NBRC 12016 / NCIMB 10680 / K1) protein is Holo-[acyl-carrier-protein] synthase.